A 592-amino-acid chain; its full sequence is Pectinesterase/pectinesterase inhibitor 3 (592 aa).

The signal sequence occupies residues Met1–Val35. Residues Ala36 to Lys238 constitute a propeptide, removed in mature 42 kDa form. Residues Ala36 to Leu273 constitute a propeptide, removed in mature 38 kDa form. Residues Pro53 to Met212 form a pectinesterase inhibitor 3 region. Asn96 and Asn215 each carry an N-linked (GlcNAc...) asparagine glycan. Residues Asp281–Gly578 form a pectinesterase 3 region. Substrate is bound by residues Thr356 and Gln386. Asp409 acts as the Proton donor; for pectinesterase activity in catalysis. Cys423 and Cys443 are disulfide-bonded. Asp430 functions as the Nucleophile; for pectinesterase activity in the catalytic mechanism. 3 residues coordinate substrate: Gln454, Arg498, and Trp500.

This sequence in the N-terminal section; belongs to the PMEI family. In the C-terminal section; belongs to the pectinesterase family. In terms of assembly, interacts with BIIDXI and At5g11420. Binds reversibly to PMEI4, PMEI7 and PMEI8 to be inhibited; the stability of the PME3-PMEIs complexes and the inhibition of the pectin methylesterase (PME) activity is pH-dependent, based on protonation status of amino-acids at the complex interface. Expressed in roots, cotyledons, hypocotyls, seedlings, leaves, stems, flowers, dry seeds and siliques. Accumulates in etiolated hypocotyls (at protein level).

It localises to the secreted. It is found in the extracellular space. Its subcellular location is the apoplast. The protein localises to the cell wall. It catalyses the reaction [(1-&gt;4)-alpha-D-galacturonosyl methyl ester](n) + n H2O = [(1-&gt;4)-alpha-D-galacturonosyl](n) + n methanol + n H(+). It functions in the pathway glycan metabolism; pectin degradation; 2-dehydro-3-deoxy-D-gluconate from pectin: step 1/5. With respect to regulation, regulated negatively by pectinesterase inhibitors (e.g. PMEI3, PMEI4, PMEI7 and PMEI9) in a pH-dependent manner, mainly in slightly acidic conditions (pH 6.0 and 5.0), especially in dark-grown hypocotyls; this processus relies on changes in the protonation of amino acids involved in intermolecular and intramolecular interactions. Acts in the modification of cell walls via demethylesterification of cell wall pectin. Required for zinc Zn(2+) homeostasis and to monitor Zn(2+) influence on cell wall-controlled growth processes such as root cell elongation. Monitors seed germination and favors root hairs production. Prevents cruciferin seed storage proteins activity, but promotes the expression of genes involved in cell wall organization and remodeling as well as genes involved in lipid and protein metabolism, during post-germinative growth of seedlings. Confers sensitivity to Zn(2+) when overexpressed. Acts as a susceptibility factor required for the initial colonization of the host tissue by virulent pathogens including Botrytis cinerea and Pectobacterium carotovorum, probably by facilitating cell wall pectine degradation by pathogen pectic enzymes after its demethylesterification. This chain is Pectinesterase/pectinesterase inhibitor 3, found in Arabidopsis thaliana (Mouse-ear cress).